Consider the following 268-residue polypeptide: MTEQYQHRARKRFGQNFLHDAGVIDKILRAIRARPEDRLLEIGPGQGALTEGLLDSGAQLDVVELDKDLIPILNGQFASKPNFNLHQGDALKFDFNTLGADPRSLRVVGNLPYNISTPLIFHLLQNASLIRDMHFMLQKEVVERMAAGPGGGDWGRLSIMVQYHCRVEHLFNVGPGAFNPPPKVDSAIVRLVPYETLPHPAKDHRVLERIVREAFNQRRKTLRNTLKLLLTSDEITASGVDGSLRPEQLDLAAFVRLADTLSEKVVTE.

S-adenosyl-L-methionine is bound by residues Asn16, Leu18, Gly43, Glu64, Asp89, and Asn110.

This sequence belongs to the class I-like SAM-binding methyltransferase superfamily. rRNA adenine N(6)-methyltransferase family. RsmA subfamily.

The protein localises to the cytoplasm. The enzyme catalyses adenosine(1518)/adenosine(1519) in 16S rRNA + 4 S-adenosyl-L-methionine = N(6)-dimethyladenosine(1518)/N(6)-dimethyladenosine(1519) in 16S rRNA + 4 S-adenosyl-L-homocysteine + 4 H(+). Functionally, specifically dimethylates two adjacent adenosines (A1518 and A1519) in the loop of a conserved hairpin near the 3'-end of 16S rRNA in the 30S particle. May play a critical role in biogenesis of 30S subunits. This Pseudomonas syringae pv. syringae (strain B728a) protein is Ribosomal RNA small subunit methyltransferase A.